The primary structure comprises 319 residues: Beta-sarcoglycan (319 aa).

Positions 1–10 (MAAAAAAAAA) are enriched in low complexity. The tract at residues 1 to 33 (MAAAAAAAAAEQQSSNGPVKKSMREKAVERRNV) is disordered. Topologically, residues 1 to 66 (MAAAAAAAAA…GLRGRKGNLA (66 aa)) are cytoplasmic. The span at 22–33 (SMREKAVERRNV) shows a compositional bias: basic and acidic residues. A helical; Signal-anchor for type II membrane protein membrane pass occupies residues 67–87 (ICVIILLFILAVINLIITLVI). Residues 88 to 318 (WAVIRIGPNG…QISDNPCGNT (231 aa)) lie on the Extracellular side of the membrane. Residues Asn-159, Asn-212, and Asn-259 are each glycosylated (N-linked (GlcNAc...) asparagine). 2 cysteine pairs are disulfide-bonded: Cys-289–Cys-315 and Cys-291–Cys-308.

This sequence belongs to the sarcoglycan beta/delta/gamma/zeta family. As to quaternary structure, cross-link to form 2 major subcomplexes: one consisting of SGCB, SGCD and SGCG and the other consisting of SGCB and SGCD. The association between SGCB and SGCG is particularly strong while SGCA is loosely associated with the other sarcoglycans. Post-translationally, disulfide bonds are present.

It is found in the cell membrane. Its subcellular location is the sarcolemma. The protein localises to the cytoplasm. It localises to the cytoskeleton. In terms of biological role, component of the sarcoglycan complex, a subcomplex of the dystrophin-glycoprotein complex which forms a link between the F-actin cytoskeleton and the extracellular matrix. This chain is Beta-sarcoglycan (SGCB), found in Pongo abelii (Sumatran orangutan).